The sequence spans 404 residues: 6-hydroxytryptophan 2,3-dioxygenase fscD (404 aa).

Histidine 341 contacts heme b.

It belongs to the indoleamine 2,3-dioxygenase family. Heme serves as cofactor.

It functions in the pathway secondary metabolite biosynthesis. Functionally, 6-hydroxytryptophan 2,3-dioxygenase; part of the fragmented gene cluster that mediates the biosynthesis of fusarochromene, a tryptophan-derived metabolite closely related to a group of mycotoxins including fusarochromanone. Within the pathway, fscD is responsible of the cleavage of the pyrrole ring of 6-hydroxytryptophan. The first step of the pathway is the epimerization of L-tryptophan to D-tryptophan in the presence of the NRPS-like tryptophan epimerase fscC. D-tryptophan is subsequently hydroxylated by the tryptophan 6-hydroxylase fscE to yield 6-hydroxytryptophan. The pyrrole ring undergoes cleavaged by the tryptophan 2,3-dioxygenase fscD and is finally converted to 4-hydroxykyrunenine by the hydrolase fscH. The NRPS-like oxidoreductase fscA reduces the carboxyl group to primary alcohol and the DMATS-type prenyltransferase fscG performs prenylation, followed by the formation of a chromene ring catalyzed by the oxidoreductase fscI, which leads to desacetylfusarochromene. Epoxidation by fscF and rearrangement reactions of chromene double bonds convert compound desacetylfusarochromene to fusarochromanones. Although specific acetyltransferases were not found near the fsc gene cluster, several predicted enzymes containing the N-acetyltransferase superfamily domain are present in the genome of F.equiseti. These predicted enzymes may have the potential to convert desacetylfusarochromene to fusarochromene. The protein is 6-hydroxytryptophan 2,3-dioxygenase fscD of Fusarium equiseti (Fusarium scirpi).